The sequence spans 82 residues: Sulfur carrier protein TusA (82 aa).

Cys19 serves as the catalytic Cysteine persulfide intermediate.

This sequence belongs to the sulfur carrier protein TusA family.

Its subcellular location is the cytoplasm. Its function is as follows. Sulfur carrier protein which probably makes part of a sulfur-relay system. The polypeptide is Sulfur carrier protein TusA (Tolumonas auensis (strain DSM 9187 / NBRC 110442 / TA 4)).